A 71-amino-acid chain; its full sequence is MPSVKVRDNEPFDVALRRFKRSCEKAGVLSEVRRRETYEKPTAVRKRKAAAAVKRHAKKLQRERKRFERLY.

The protein belongs to the bacterial ribosomal protein bS21 family.

The polypeptide is Small ribosomal subunit protein bS21 (Chromohalobacter salexigens (strain ATCC BAA-138 / DSM 3043 / CIP 106854 / NCIMB 13768 / 1H11)).